Reading from the N-terminus, the 451-residue chain is Phosphoglucosamine mutase (451 aa).

The active-site Phosphoserine intermediate is the S107. Residues S107, D246, D248, and D250 each contribute to the Mg(2+) site. S107 is subject to Phosphoserine.

Belongs to the phosphohexose mutase family. Requires Mg(2+) as cofactor. In terms of processing, activated by phosphorylation.

The catalysed reaction is alpha-D-glucosamine 1-phosphate = D-glucosamine 6-phosphate. In terms of biological role, catalyzes the conversion of glucosamine-6-phosphate to glucosamine-1-phosphate. This chain is Phosphoglucosamine mutase, found in Burkholderia multivorans (strain ATCC 17616 / 249).